The sequence spans 181 residues: Inner membrane-spanning protein YciB (181 aa).

5 consecutive transmembrane segments (helical) span residues 22–42, 50–70, 80–100, 122–142, and 148–168; these read IYTA…VTYA, MQLI…FLHD, IVYC…KPVI, WVLF…EMPL, and FKVF…GMYV.

This sequence belongs to the YciB family.

It is found in the cell inner membrane. Functionally, plays a role in cell envelope biogenesis, maintenance of cell envelope integrity and membrane homeostasis. The polypeptide is Inner membrane-spanning protein YciB (Aliivibrio fischeri (strain MJ11) (Vibrio fischeri)).